Here is a 260-residue protein sequence, read N- to C-terminus: Sulfoquinovose 1-dehydrogenase (260 aa).

Residue tyrosine 160 is the Proton acceptor of the active site.

This sequence belongs to the short-chain dehydrogenases/reductases (SDR) family.

The catalysed reaction is 6-sulfo-D-quinovose + NAD(+) = 6-deoxy-6-sulfo-D-glucono-1,5-lactone + NADH + H(+). Functionally, catalyzes the oxidation of sulfoquinovose to 6-deoxy-6-sulfo-D-glucono-1,5-lactone, with a strong preference for NAD(+) as the electron acceptor. Is involved in a degradation pathway of sulfoquinovose (SQ) that allows P.putida SQ1 to use SQ as the sole carbon and energy source for growth. The chain is Sulfoquinovose 1-dehydrogenase from Pseudomonas putida (Arthrobacter siderocapsulatus).